The following is a 410-amino-acid chain: Putative nickel insertion protein (410 aa).

The protein belongs to the LarC family.

The sequence is that of Putative nickel insertion protein from Cyanothece sp. (strain PCC 7425 / ATCC 29141).